A 162-amino-acid chain; its full sequence is Caveolin-2 (162 aa).

The Cytoplasmic segment spans residues 1–86 (MGLETEKADV…FEISKYVIYK (86 aa)). At Y19 the chain carries Phosphotyrosine; by SRC. Phosphoserine occurs at positions 20 and 23. Position 27 is a phosphotyrosine; by SRC (Y27). At S36 the chain carries Phosphoserine. The helical intramembrane region spans 87 to 107 (FLTVFLAIPLAFIAGILFATL). The Cytoplasmic portion of the chain corresponds to 108–162 (SCLHIWILMPFVKTCLMVLPSVQTIWKSVTDVVIGPLCTSVGRIFSSVSMQLSHD).

Belongs to the caveolin family. As to quaternary structure, monomer or homodimer. Interacts with CAV1; the interaction forms a stable heterooligomeric complex that is required for targeting to lipid rafts and for caveolae formation. Tyrosine phosphorylated forms do not form heterooligomers with the Tyr-19-phosphorylated form existing as a monomer or dimer and the Tyr-27-form as a monomer only. Interacts (tyrosine phosphorylated form) with the SH2 domain-containing proteins, RASA1, NCK1 and SRC. Interacts (tyrosine phosphorylated form) with INSR; the interaction (Tyr-27-phosphorylated form) is increased on insulin stimulation. Interacts (Tyr-19-phosphorylated form) with MAPK1 (phosphorylated form); the interaction, promoted by insulin, leads to nuclear location and MAPK1 activation. Interacts with STAT3; the interaction is increased on insulin-induced tyrosine phosphorylation leading to STAT activation. Post-translationally, phosphorylated on serine and tyrosine residues. CAV1 promotes phosphorylation on Ser-23 which targets the complex to the plasma membrane, lipid rafts and caveolae. Phosphorylation on Ser-36 appears to modulate mitosis in endothelial cells. Phosphorylation on both Tyr-19 and Tyr-27 is required for insulin-induced 'Ser-727' phosphorylation of STAT3 and its activation. Phosphorylation on Tyr-19 is required for insulin-induced phosphorylation of MAPK1 and DNA binding of STAT3. Tyrosine phosphorylation is induced by both EGF and insulin. As to expression, in the retina, mainly expressed in vessels, but also diffuse expression in the inner and outer plexiform layers and in the inner nuclear layer.

The protein resides in the nucleus. Its subcellular location is the cytoplasm. The protein localises to the golgi apparatus membrane. It is found in the cell membrane. It localises to the membrane. The protein resides in the caveola. May act as a scaffolding protein within caveolar membranes. Interacts directly with G-protein alpha subunits and can functionally regulate their activity. Acts as an accessory protein in conjunction with CAV1 in targeting to lipid rafts and driving caveolae formation. The Ser-36 phosphorylated form has a role in modulating mitosis in endothelial cells. Positive regulator of cellular mitogenesis of the MAPK signaling pathway. Required for the insulin-stimulated nuclear translocation and activation of MAPK1 and STAT3, and the subsequent regulation of cell cycle progression. This Rattus norvegicus (Rat) protein is Caveolin-2 (Cav2).